The chain runs to 882 residues: Kelch repeat-containing protein 2 (882 aa).

Residues 41-60 are disordered; sequence TPTLPPNQHRGISGASTALP. Kelch repeat units lie at residues 99-143, 153-207, 213-267, 268-317, 319-369, and 371-417; these read RIFV…PPRV, AYVV…IIAS, KLYL…AYDN, KLWV…VYKH, MCVL…LMKN, and KLLI…LCPG. At threonine 455 the chain carries Phosphothreonine. Residues 480-496 show a composition bias toward basic and acidic residues; that stretch reads LDDKAFERKSDREEKKP. Positions 480–516 are disordered; the sequence is LDDKAFERKSDREEKKPQSSKVDSSINKESPGTGIKV. Residues 498 to 509 are compositionally biased toward polar residues; it reads SSKVDSSINKES. Serine 509 carries the post-translational modification Phosphoserine. Coiled coils occupy residues 550–685 and 728–881; these read KNLF…QKIT and NKIE…LEQK.

As to quaternary structure, interacts with KEL1.

The polypeptide is Kelch repeat-containing protein 2 (KEL2) (Saccharomyces cerevisiae (strain ATCC 204508 / S288c) (Baker's yeast)).